The sequence spans 112 residues: Putative pterin-4-alpha-carbinolamine dehydratase (112 aa).

Belongs to the pterin-4-alpha-carbinolamine dehydratase family.

It catalyses the reaction (4aS,6R)-4a-hydroxy-L-erythro-5,6,7,8-tetrahydrobiopterin = (6R)-L-erythro-6,7-dihydrobiopterin + H2O. The protein is Putative pterin-4-alpha-carbinolamine dehydratase of Vibrio parahaemolyticus serotype O3:K6 (strain RIMD 2210633).